The chain runs to 241 residues: Probable transcriptional regulatory protein LHK_02347 (241 aa).

It belongs to the TACO1 family.

The protein resides in the cytoplasm. This chain is Probable transcriptional regulatory protein LHK_02347, found in Laribacter hongkongensis (strain HLHK9).